The following is a 286-amino-acid chain: 2-hydroxy-6-oxo-6-phenylhexa-2,4-dienoate hydrolase (286 aa).

The AB hydrolase-1 domain maps to 36–271; the sequence is VIMLHGGGPG…RCGHWAQWEH (236 aa). Substrate contacts are provided by residues 42–43, N51, N111, S180, and R190; that span reads GG. H265 serves as the catalytic Proton acceptor. Substrate is bound at residue W266.

This sequence belongs to the AB hydrolase superfamily. BphD family. In terms of assembly, homodimer.

The catalysed reaction is 2,6-dioxo-6-phenylhexa-3-enoate + H2O = 2-oxopent-4-enoate + benzoate + H(+). Its pathway is xenobiotic degradation; biphenyl degradation; 2-hydroxy-2,4-pentadienoate and benzoate from biphenyl: step 4/4. Catalyzes an unusual C-C bond hydrolysis of 2-hydroxy-6-oxo-6-phenylhexa-2,4-dienoic acid (HOPDA) to produce benzoic acid and 2-hydroxy-2,4-pentadienoic acid (HPD). This is 2-hydroxy-6-oxo-6-phenylhexa-2,4-dienoate hydrolase from Burkholderia cepacia (Pseudomonas cepacia).